A 230-amino-acid polypeptide reads, in one-letter code: Fibrillarin-like rRNA/tRNA 2'-O-methyltransferase (230 aa).

S-adenosyl-L-methionine-binding positions include 87-88, 105-106, 130-131, and 150-153; these read TT, EY, DA, and DVAQ.

Interacts with nop5. Component of box C/D small ribonucleoprotein (sRNP) particles that contain rpl7ae, FlpA and nop5, plus a guide RNA.

Its function is as follows. Involved in pre-rRNA and tRNA processing. Utilizes the methyl donor S-adenosyl-L-methionine to catalyze the site-specific 2'-hydroxyl methylation of ribose moieties in rRNA and tRNA. Site specificity is provided by a guide RNA that base pairs with the substrate. Methylation occurs at a characteristic distance from the sequence involved in base pairing with the guide RNA. The chain is Fibrillarin-like rRNA/tRNA 2'-O-methyltransferase from Methanocaldococcus jannaschii (strain ATCC 43067 / DSM 2661 / JAL-1 / JCM 10045 / NBRC 100440) (Methanococcus jannaschii).